Reading from the N-terminus, the 341-residue chain is UDP-3-O-acylglucosamine N-acyltransferase (341 aa).

H241 serves as the catalytic Proton acceptor.

It belongs to the transferase hexapeptide repeat family. LpxD subfamily. Homotrimer.

The catalysed reaction is a UDP-3-O-[(3R)-3-hydroxyacyl]-alpha-D-glucosamine + a (3R)-hydroxyacyl-[ACP] = a UDP-2-N,3-O-bis[(3R)-3-hydroxyacyl]-alpha-D-glucosamine + holo-[ACP] + H(+). Its pathway is bacterial outer membrane biogenesis; LPS lipid A biosynthesis. Functionally, catalyzes the N-acylation of UDP-3-O-acylglucosamine using 3-hydroxyacyl-ACP as the acyl donor. Is involved in the biosynthesis of lipid A, a phosphorylated glycolipid that anchors the lipopolysaccharide to the outer membrane of the cell. The chain is UDP-3-O-acylglucosamine N-acyltransferase from Histophilus somni (strain 129Pt) (Haemophilus somnus).